The sequence spans 843 residues: Complement component C7 (843 aa).

A signal peptide spans Met1–Ala22. The region spanning Asn27–Pro80 is the TSP type-1 1 domain. 7 disulfides stabilise this stretch: Cys28-Cys63, Cys39-Cys73, Cys42-Cys79, Cys85-Cys96, Cys91-Cys109, Cys103-Cys119, and Cys128-Cys165. A C-linked (Man) tryptophan glycan is attached at Trp36. One can recognise an LDL-receptor class A domain in the interval Glu83–Asp121. Residues Asp108–Glu120 are compositionally biased toward acidic residues. A disordered region spans residues Asp108–Gly143. The segment covering Asp121 to Lys132 has biased composition (basic and acidic residues). Positions Arg124–His456 constitute an MACPF domain. Residue Asn202 is glycosylated (N-linked (GlcNAc...) asparagine). The tract at residues Ser219 to Asn240 is disordered. A compositionally biased stretch (low complexity) spans Phe225–Ser234. 12 disulfides stabilise this stretch: Cys337–Cys353, Cys433–Cys560, Cys455–Cys505, Cys457–Cys473, Cys460–Cys475, Cys477–Cys486, Cys512–Cys545, Cys523–Cys535, Cys571–Cys613, Cys599–Cys626, Cys631–Cys673, and Cys659–Cys688. In terms of domain architecture, EGF-like spans Cys457 to Glu487. One can recognise a TSP type-1 2 domain in the interval Asp500 to Glu549. Trp503, Trp506, and Trp509 each carry a C-linked (Man) tryptophan; partial glycan. The segment at Lys516–Glu538 is disordered. CCP stretches follow at residues Cys545–Glu615 and Asp616–Asn693. Sushi domains are found at residues Glu569–Lys628 and Ile629–Gln690. Factor I module (FIM) stretches follow at residues Leu695 to Glu770 and Lys771 to Gln843. A glycan (O-linked (GalNAc...) threonine) is linked at Thr696. Intrachain disulfides connect Cys702–Cys713, Cys715–Cys750, Cys721–Cys743, Cys728–Cys763, Cys773–Cys782, Cys776–Cys789, Cys791–Cys825, Cys797–Cys818, and Cys805–Cys838. Asn754 is a glycosylation site (N-linked (GlcNAc...) (complex) asparagine).

Belongs to the complement C6/C7/C8/C9 family. In terms of assembly, monomer or dimer; as a C5b-7 complex it can also form multimeric rosettes. Component of the membrane attack complex (MAC), composed of complement C5b, C6, C7, C8A, C8B, C8G and multiple copies of the pore-forming subunit C9. Post-translationally, C-, N- and O-glycosylated. O-glycosylated with core 1 or possibly core 8 glycans.

It is found in the secreted. Its subcellular location is the target cell membrane. Its activity is regulated as follows. Membrane attack complex (MAC) assembly is inhibited by CD59, thereby protecting self-cells from damage during complement activation. MAC assembly is also inhibited by clusterin (CLU) chaperones that inhibit polymerization of C9. In terms of biological role, component of the membrane attack complex (MAC), a multiprotein complex activated by the complement cascade, which inserts into a target cell membrane and forms a pore, leading to target cell membrane rupture and cell lysis. The MAC is initiated by proteolytic cleavage of C5 into complement C5b in response to the classical, alternative, lectin and GZMK complement pathways. The complement pathways consist in a cascade of proteins that leads to phagocytosis and breakdown of pathogens and signaling that strengthens the adaptive immune system. C7 serves as a membrane anchor. During MAC assembly, associates with C5b and C6 to form the C5b-7 complex, a key lipophilic precursor of the MAC complex, which associates with the outer leaflet and reduces the energy for membrane bending. The polypeptide is Complement component C7 (Homo sapiens (Human)).